A 258-amino-acid chain; its full sequence is Large ribosomal subunit protein eL8z (258 aa).

The disordered stretch occupies residues 1–20 (MAPKRGGRAPVPAKKKTEKV).

It belongs to the eukaryotic ribosomal protein eL8 family.

This Oryza sativa subsp. japonica (Rice) protein is Large ribosomal subunit protein eL8z (RPL7A-1).